Consider the following 188-residue polypeptide: Ribosome-recycling factor (188 aa).

Belongs to the RRF family.

The protein resides in the cytoplasm. In terms of biological role, responsible for the release of ribosomes from messenger RNA at the termination of protein biosynthesis. May increase the efficiency of translation by recycling ribosomes from one round of translation to another. This is Ribosome-recycling factor from Anaeromyxobacter sp. (strain K).